The sequence spans 463 residues: Asparagine--tRNA ligase (463 aa).

The protein belongs to the class-II aminoacyl-tRNA synthetase family. Homodimer.

It localises to the cytoplasm. It catalyses the reaction tRNA(Asn) + L-asparagine + ATP = L-asparaginyl-tRNA(Asn) + AMP + diphosphate + H(+). This is Asparagine--tRNA ligase from Nostoc sp. (strain PCC 7120 / SAG 25.82 / UTEX 2576).